A 240-amino-acid chain; its full sequence is 4-hydroxy-tetrahydrodipicolinate reductase (240 aa).

Residues 79–81 (ATT) and 103–106 (SANM) contribute to the NAD(+) site. His-135 (proton donor/acceptor) is an active-site residue. Residue His-136 participates in (S)-2,3,4,5-tetrahydrodipicolinate binding. The active-site Proton donor is Lys-139. Residue 145–146 (GT) participates in (S)-2,3,4,5-tetrahydrodipicolinate binding.

This sequence belongs to the DapB family.

The protein localises to the cytoplasm. It catalyses the reaction (S)-2,3,4,5-tetrahydrodipicolinate + NAD(+) + H2O = (2S,4S)-4-hydroxy-2,3,4,5-tetrahydrodipicolinate + NADH + H(+). It carries out the reaction (S)-2,3,4,5-tetrahydrodipicolinate + NADP(+) + H2O = (2S,4S)-4-hydroxy-2,3,4,5-tetrahydrodipicolinate + NADPH + H(+). It functions in the pathway amino-acid biosynthesis; L-lysine biosynthesis via DAP pathway; (S)-tetrahydrodipicolinate from L-aspartate: step 4/4. Functionally, catalyzes the conversion of 4-hydroxy-tetrahydrodipicolinate (HTPA) to tetrahydrodipicolinate. This is 4-hydroxy-tetrahydrodipicolinate reductase from Staphylococcus aureus (strain USA300).